The sequence spans 373 residues: Sodium-dependent organic anion transporter (373 aa).

The span at 1 to 15 (MSTDCAGNSTCPVNS) shows a compositional bias: polar residues. A disordered region spans residues 1–21 (MSTDCAGNSTCPVNSTEEDPP). Topologically, residues 1–32 (MSTDCAGNSTCPVNSTEEDPPVGMEGHANLKL) are extracellular. Asparagine 8 and asparagine 14 each carry an N-linked (GlcNAc...) asparagine glycan. The helical transmembrane segment at 33-53 (LFTVLSAVMVGLVMFSFGCSV) threads the bilayer. Over 54 to 67 (ESQKLWLHLRRPWG) the chain is Cytoplasmic. Residues 68–88 (IAVGLLSQFGLMPLTAYLLAI) traverse the membrane as a helical segment. Residues 89 to 97 (GFGLKPFQA) lie on the Extracellular side of the membrane. The helical transmembrane segment at 98 to 118 (IAVLMMGSCPGGTISNVLTFW) threads the bilayer. Topologically, residues 119-126 (VDGDMDLS) are cytoplasmic. The chain crosses the membrane as a helical span at residues 127-147 (ISMTTCSTVAALGMMPLCLYI). Topologically, residues 148-157 (YTRSWTLTQN) are extracellular. A helical transmembrane segment spans residues 158–178 (LVIPYQSIGITLVSLVVPVAS). Residues 179 to 195 (GVYVNYRWPKQATVILK) lie on the Cytoplasmic side of the membrane. A helical membrane pass occupies residues 196 to 216 (VGAILGGMLLLVVAVTGMVLA). Topologically, residues 217-224 (KGWNTDVT) are extracellular. The helical transmembrane segment at 225–245 (LLVISCIFPLVGHVTGFLLAF) threads the bilayer. Topologically, residues 246 to 265 (LTHQSWQRCRTISIETGAQN) are cytoplasmic. The helical transmembrane segment at 266–283 (IQLCIAMLQLSFSAEYLV) threads the bilayer. Position 284 (glutamine 284) is a topological domain, extracellular. The chain crosses the membrane as a helical span at residues 285 to 305 (LLNFALAYGLFQVLHGLLIVA). Topologically, residues 306–373 (AYQAYKRRQK…ELTSHIPSCE (68 aa)) are cytoplasmic.

It belongs to the bile acid:sodium symporter (BASS) (TC 2.A.28) family. In terms of processing, glycosylated. Highest expression in lung and testis, moderate expression in heart, bladder and skin, and low expression in blood, liver, stomach, small intestine, spleen, kidney, adrenal gland, seminal vesicle, preputial gland, coagulating gland, lacrimal gland/eye, and brain.

Its subcellular location is the membrane. It carries out the reaction estrone 3-sulfate(out) + 2 Na(+)(out) = estrone 3-sulfate(in) + 2 Na(+)(in). It catalyses the reaction 17beta-estradiol 3-sulfate(out) + 2 Na(+)(out) = 17beta-estradiol 3-sulfate(in) + 2 Na(+)(in). The enzyme catalyses dehydroepiandrosterone 3-sulfate(out) + 2 Na(+)(out) = dehydroepiandrosterone 3-sulfate(in) + 2 Na(+)(in). The catalysed reaction is androst-5-ene-diol 3-sulfate(out) + 2 Na(+)(out) = androst-5-ene-diol 3-sulfate(in) + 2 Na(+)(in). It carries out the reaction pregnenolone sulfate(out) + 2 Na(+)(out) = pregnenolone sulfate(in) + 2 Na(+)(in). It catalyses the reaction taurolithocholate 3-sulfate(out) + 2 Na(+)(out) = taurolithocholate 3-sulfate(in) + 2 Na(+)(in). The enzyme catalyses androsterone 3alpha-sulfate(out) + 2 Na(+)(out) = androsterone 3alpha-sulfate(in) + 2 Na(+)(in). The catalysed reaction is 5alpha-dihydrotestosterone sulfate(out) + 2 Na(+)(out) = 5alpha-dihydrotestosterone sulfate(in) + 2 Na(+)(in). It carries out the reaction 17beta-estradiol 17-sulfate(out) + 2 Na(+)(out) = 17beta-estradiol 17-sulfate(in) + 2 Na(+)(in). It catalyses the reaction 17alpha-hydroxypregnenolone 3-sulfate(out) + 2 Na(+)(out) = 17alpha-hydroxypregnenolone 3-sulfate(in) + 2 Na(+)(in). The enzyme catalyses epiandrosterone 3-sulfate(out) + 2 Na(+)(out) = epiandrosterone 3-sulfate(in) + 2 Na(+)(in). The catalysed reaction is epitestosterone 17-sulfate(out) + 2 Na(+)(out) = epitestosterone 17-sulfate(in) + 2 Na(+)(in). It carries out the reaction testosterone 17-sulfate(out) + 2 Na(+)(out) = testosterone 17-sulfate(in) + 2 Na(+)(in). It catalyses the reaction 16alpha-hydroxydehydroepiandrosterone 3-sulfate(out) + 2 Na(+)(out) = 16alpha-hydroxydehydroepiandrosterone 3-sulfate(in) + 2 Na(+)(in). Functionally, transports sulfoconjugated steroid hormones from the extracellular compartment into the cytosol in a sodium-dependent manner without hydrolysis. Steroid sulfate hormones are commonly considered to be biologically inactive metabolites, that may be activated by steroid sulfatases into free steroids. May play an important role by delivering sulfoconjugated steroids to specific target cells in reproductive organs. May play a role transporting the estriol precursor 16alpha-hydroxydehydroepiandrosterone 3-sulfate (16a-OH-DHEAS) at the fetal blood vessel endothelium. Can also transport other sulfoconjugated molecules such as taurolithocholic acid-3-sulfate and sulfoconjugated pyrenes. The chain is Sodium-dependent organic anion transporter (Slc10a6) from Mus musculus (Mouse).